The sequence spans 62 residues: Bacteriocin pediocin PA-1 (62 aa).

A propeptide spanning residues 1 to 18 (MKKIEKLTEKEMANIIGG) is cleaved from the precursor. Intrachain disulfides connect Cys-27–Cys-32 and Cys-42–Cys-62. A hydrophobic region spans residues 40 to 52 (TTCIINNGAMAWA).

Belongs to the bacteriocin class IIA/YGNGV family.

It is found in the secreted. Bactericidal activity (effective inhibitor of L.monocytogenes). The polypeptide is Bacteriocin pediocin PA-1 (pedA) (Pediococcus acidilactici).